Reading from the N-terminus, the 365-residue chain is 3-dehydroquinate synthase (365 aa).

NAD(+) contacts are provided by residues 106–110 (GVIGD), 130–131 (TT), Lys-142, Lys-151, and 169–172 (FFAT). Zn(2+)-binding residues include Glu-184, His-247, and His-264.

Belongs to the sugar phosphate cyclases superfamily. Dehydroquinate synthase family. The cofactor is NAD(+). Co(2+) is required as a cofactor. Requires Zn(2+) as cofactor.

The protein resides in the cytoplasm. It catalyses the reaction 7-phospho-2-dehydro-3-deoxy-D-arabino-heptonate = 3-dehydroquinate + phosphate. It functions in the pathway metabolic intermediate biosynthesis; chorismate biosynthesis; chorismate from D-erythrose 4-phosphate and phosphoenolpyruvate: step 2/7. In terms of biological role, catalyzes the conversion of 3-deoxy-D-arabino-heptulosonate 7-phosphate (DAHP) to dehydroquinate (DHQ). This is 3-dehydroquinate synthase from Listeria monocytogenes serotype 4b (strain F2365).